The chain runs to 429 residues: UDP-N-acetylglucosamine 1-carboxyvinyltransferase (429 aa).

22-23 (KN) is a binding site for phosphoenolpyruvate. R102 contacts UDP-N-acetyl-alpha-D-glucosamine. C126 serves as the catalytic Proton donor. C126 is modified (2-(S-cysteinyl)pyruvic acid O-phosphothioketal). Residues 131 to 135 (RPVDL), D316, and I338 each bind UDP-N-acetyl-alpha-D-glucosamine.

This sequence belongs to the EPSP synthase family. MurA subfamily.

Its subcellular location is the cytoplasm. It catalyses the reaction phosphoenolpyruvate + UDP-N-acetyl-alpha-D-glucosamine = UDP-N-acetyl-3-O-(1-carboxyvinyl)-alpha-D-glucosamine + phosphate. The protein operates within cell wall biogenesis; peptidoglycan biosynthesis. Cell wall formation. Adds enolpyruvyl to UDP-N-acetylglucosamine. This is UDP-N-acetylglucosamine 1-carboxyvinyltransferase from Methylocella silvestris (strain DSM 15510 / CIP 108128 / LMG 27833 / NCIMB 13906 / BL2).